Here is a 377-residue protein sequence, read N- to C-terminus: uncharacterized protein (377 aa).

Helical transmembrane passes span 26–46, 67–87, 108–128, and 135–155; these read TFQN…VVAI, TVGS…WVII, FLTF…ISLT, and IDYG…ALYI.

It localises to the cell membrane. This is an uncharacterized protein from Methanocaldococcus jannaschii (strain ATCC 43067 / DSM 2661 / JAL-1 / JCM 10045 / NBRC 100440) (Methanococcus jannaschii).